A 371-amino-acid polypeptide reads, in one-letter code: Chaperone protein DnaJ (371 aa).

Residues 5–69 (DYYEVLGLSK…QKRAQYDQFG (65 aa)) enclose the J domain. The CR-type zinc finger occupies 133–215 (GKELNVEIPV…CHGSGKVRKR (83 aa)). Zn(2+)-binding residues include Cys146, Cys149, Cys163, Cys166, Cys189, Cys192, Cys203, and Cys206. CXXCXGXG motif repeat units follow at residues 146–153 (CDTCKGSG), 163–170 (CKHCSGSG), 189–196 (CSHCSGTG), and 203–210 (CTTCHGSG).

It belongs to the DnaJ family. Homodimer. The cofactor is Zn(2+).

It localises to the cytoplasm. Its function is as follows. Participates actively in the response to hyperosmotic and heat shock by preventing the aggregation of stress-denatured proteins and by disaggregating proteins, also in an autonomous, DnaK-independent fashion. Unfolded proteins bind initially to DnaJ; upon interaction with the DnaJ-bound protein, DnaK hydrolyzes its bound ATP, resulting in the formation of a stable complex. GrpE releases ADP from DnaK; ATP binding to DnaK triggers the release of the substrate protein, thus completing the reaction cycle. Several rounds of ATP-dependent interactions between DnaJ, DnaK and GrpE are required for fully efficient folding. Also involved, together with DnaK and GrpE, in the DNA replication of plasmids through activation of initiation proteins. The protein is Chaperone protein DnaJ of Bacillus cereus (strain AH820).